A 472-amino-acid chain; its full sequence is Sarcalumenin (472 aa).

An N-terminal signal peptide occupies residues Met-1 to Ala-19. One can recognise a Dynamin-type G domain in the interval Ile-89–Ala-330. The segment at Gly-99–Ser-106 is G1 motif. The N-linked (GlcNAc...) asparagine glycan is linked to Ser-102. The G2 motif stretch occupies residues Glu-127 to Pro-128. A G3 motif region spans residues Asp-189–Gly-192. Residues Asn-254–Asp-257 are G4 motif. Position 277 (Pro-277) is a region of interest, G5 motif. 2 N-linked (GlcNAc...) asparagine glycosylation sites follow: Asn-280 and Asn-388.

The protein belongs to the TRAFAC class dynamin-like GTPase superfamily. Dynamin/Fzo/YdjA family. In terms of processing, N-glycosylated. Detected in skeletal muscle.

Its subcellular location is the sarcoplasmic reticulum lumen. It localises to the sarcoplasmic reticulum membrane. The polypeptide is Sarcalumenin (SRL) (Oryctolagus cuniculus (Rabbit)).